A 268-amino-acid polypeptide reads, in one-letter code: Putative esterase/lipase 2 (268 aa).

Histidine 29 is a catalytic residue. The active-site Charge relay system is serine 98.

The protein belongs to the lipase/esterase LIP3/BchO family.

The chain is Putative esterase/lipase 2 from Mycoplasma genitalium (strain ATCC 33530 / DSM 19775 / NCTC 10195 / G37) (Mycoplasmoides genitalium).